The sequence spans 148 residues: Large ribosomal subunit protein bL9 (148 aa).

The protein belongs to the bacterial ribosomal protein bL9 family.

Its function is as follows. Binds to the 23S rRNA. This chain is Large ribosomal subunit protein bL9, found in Finegoldia magna (strain ATCC 29328 / DSM 20472 / WAL 2508) (Peptostreptococcus magnus).